A 318-amino-acid polypeptide reads, in one-letter code: MEITFLGTSSGVPTRARNVSSVALRLPQRAEVWLFDCGEGTQHQLLRSDIKTSQLRRIFITHLHGDHIFGLMGLLASCGLAGNAQPVDLYGPPGLKDYIQACSKYSHTHFGNRVQVYTVEPGLVYEDEEFTVTCDLLKHRIPAFGYRIAEKDRTGRFDVEKAKSLGIPPGRIYGQLKKGETVTLTDGRVIRGQDLCGPTEAGRKFAYCTDTVFCETAIELAQGVDVLIHEATFAHQDAELAFDRLHSTSTMAAQVALAAGVNLLIMTHFSPRYAPGNPLDVTNLLQEARAIFPHTKLAYDFFNYEIPRHRSDHLVEVS.

Zn(2+) contacts are provided by His-62, His-64, Asp-66, His-67, His-139, Asp-210, and His-268. The Proton acceptor role is filled by Asp-66.

It belongs to the RNase Z family. In terms of assembly, homodimer. Zn(2+) serves as cofactor.

It carries out the reaction Endonucleolytic cleavage of RNA, removing extra 3' nucleotides from tRNA precursor, generating 3' termini of tRNAs. A 3'-hydroxy group is left at the tRNA terminus and a 5'-phosphoryl group is left at the trailer molecule.. Its function is as follows. Zinc phosphodiesterase, which displays some tRNA 3'-processing endonuclease activity. Probably involved in tRNA maturation, by removing a 3'-trailer from precursor tRNA. This is Ribonuclease Z from Gloeothece citriformis (strain PCC 7424) (Cyanothece sp. (strain PCC 7424)).